The primary structure comprises 40 residues: Lucifensin (40 aa).

3 disulfide bridges follow: Cys-3/Cys-30, Cys-16/Cys-36, and Cys-20/Cys-38.

It belongs to the invertebrate defensin family. Type 1 subfamily. In terms of processing, the disulfide bonds are essential for antimicrobial activity. As to expression, larval fat body, hemolymph and salivary glands (at protein level).

The protein localises to the secreted. Functionally, shows strong antibacterial activity against the Gram-positive bacterium M.luteus. Also shows antibacterial activity against the Gram-positive bacteria E.fecalis, S.aureus, S.carnosus, S.pneumoniae and S.pyogenes and against a number of methicillin-resistant S.aureus and glycopeptide-intermediate S.aureus isolates. Does not show antibacterial activity against Gram-negative bacteria or antifungal activity against C.utilis. Shows slight antifungal activity against C.albicans. This chain is Lucifensin, found in Lucilia cuprina (Green bottle fly).